Consider the following 1116-residue polypeptide: MAP kinase kinase kinase mkh1 (1116 aa).

Disordered regions lie at residues 510-601 (LKMP…SNSL) and 618-647 (ALDESDLSGDPFWAIQPKQSSSQVPKENHH). A compositionally biased stretch (low complexity) spans 515 to 531 (NSGSSAPQSPSSNTSAS). Positions 553-569 (LRRKNTLTRRPSIRHAR) are enriched in basic residues. The segment covering 588–601 (SFDPKASSKSSNSL) has biased composition (low complexity). A compositionally biased stretch (polar residues) spans 634–647 (PKQSSSQVPKENHH). One can recognise a Protein kinase domain in the interval 825–1094 (WMKGELIGNG…AEELLNHPFM (270 aa)). Residues 831–839 (IGNGTYGKV) and Lys854 each bind ATP. Asp955 serves as the catalytic Proton acceptor.

Belongs to the protein kinase superfamily. STE Ser/Thr protein kinase family. MAP kinase kinase kinase subfamily.

It carries out the reaction L-seryl-[protein] + ATP = O-phospho-L-seryl-[protein] + ADP + H(+). It catalyses the reaction L-threonyl-[protein] + ATP = O-phospho-L-threonyl-[protein] + ADP + H(+). Its function is as follows. May regulate cell morphology, cell wall integrity, salt resistance, cell cycle reentry from stationary-phase arrest, and filamentous growth in response to stress. Activates the MAP kinase kinase skh1/pek1 by phosphorylation. The protein is MAP kinase kinase kinase mkh1 (mkh1) of Schizosaccharomyces pombe (strain 972 / ATCC 24843) (Fission yeast).